We begin with the raw amino-acid sequence, 376 residues long: MYG1 exonuclease (376 aa).

The N-terminal 47 residues, 1–47 (MGHRFLRGLLTLLLPPPPLYTRHRMLGPESVPPPKRSRSKLMAPPRI), are a transit peptide targeting the mitochondrion. Phosphoserine is present on Ser-120. N6-acetyllysine is present on residues Lys-267 and Lys-273.

The protein belongs to the MYG1 family. As to expression, ubiquitously expressed, with highest levels in testis.

It is found in the nucleus. The protein resides in the nucleoplasm. It localises to the mitochondrion matrix. The protein localises to the nucleolus. Functionally, 3'-5' RNA exonuclease which cleaves in situ on specific transcripts in both nucleus and mitochondrion. Involved in regulating spatially segregated organellar RNA processing, acts as a coordinator of nucleo-mitochondrial crosstalk. In nucleolus, processes pre-ribosomal RNA involved in ribosome assembly and alters cytoplasmic translation. In mitochondrial matrix, processes 3'-termini of the mito-ribosomal and messenger RNAs and controls translation of mitochondrial proteins. This is MYG1 exonuclease from Homo sapiens (Human).